A 310-amino-acid chain; its full sequence is UDP-N-acetylenolpyruvoylglucosamine reductase (310 aa).

An FAD-binding PCMH-type domain is found at 34–213; that stretch reads RAGGNAEVLF…LRRMNEITSS (180 aa). The active site involves arginine 178. Catalysis depends on serine 227, which acts as the Proton donor. The active site involves glutamate 297.

The protein belongs to the MurB family. FAD serves as cofactor.

Its subcellular location is the cytoplasm. It catalyses the reaction UDP-N-acetyl-alpha-D-muramate + NADP(+) = UDP-N-acetyl-3-O-(1-carboxyvinyl)-alpha-D-glucosamine + NADPH + H(+). Its pathway is cell wall biogenesis; peptidoglycan biosynthesis. In terms of biological role, cell wall formation. This Parvibaculum lavamentivorans (strain DS-1 / DSM 13023 / NCIMB 13966) protein is UDP-N-acetylenolpyruvoylglucosamine reductase.